Consider the following 405-residue polypeptide: S-adenosylmethionine synthase (405 aa).

His-22 lines the ATP pocket. Residue Asp-24 coordinates Mg(2+). Glu-50 is a binding site for K(+). L-methionine is bound by residues Glu-63 and Gln-107. A flexible loop region spans residues 107 to 117 (QSPDIAQGVNR). Residues 184–186 (DGK), 250–251 (RF), Asp-259, 265–266 (RK), Ala-282, and Lys-286 contribute to the ATP site. Asp-259 is a binding site for L-methionine. Lys-290 contributes to the L-methionine binding site.

It belongs to the AdoMet synthase family. Homotetramer; dimer of dimers. Mg(2+) serves as cofactor. Requires K(+) as cofactor.

The protein localises to the cytoplasm. It catalyses the reaction L-methionine + ATP + H2O = S-adenosyl-L-methionine + phosphate + diphosphate. The protein operates within amino-acid biosynthesis; S-adenosyl-L-methionine biosynthesis; S-adenosyl-L-methionine from L-methionine: step 1/1. Functionally, catalyzes the formation of S-adenosylmethionine (AdoMet) from methionine and ATP. The overall synthetic reaction is composed of two sequential steps, AdoMet formation and the subsequent tripolyphosphate hydrolysis which occurs prior to release of AdoMet from the enzyme. This is S-adenosylmethionine synthase from Roseiflexus castenholzii (strain DSM 13941 / HLO8).